The sequence spans 102 residues: Small ribosomal subunit protein uS10 (102 aa).

The protein belongs to the universal ribosomal protein uS10 family. Part of the 30S ribosomal subunit.

In terms of biological role, involved in the binding of tRNA to the ribosomes. This chain is Small ribosomal subunit protein uS10, found in Mesorhizobium japonicum (strain LMG 29417 / CECT 9101 / MAFF 303099) (Mesorhizobium loti (strain MAFF 303099)).